A 193-amino-acid chain; its full sequence is dCTP deaminase (193 aa).

Residues 110 to 115 (RSSLAR), Asp-128, 136 to 138 (VLE), Tyr-171, Lys-178, and Gln-182 each bind dCTP. Glu-138 (proton donor/acceptor) is an active-site residue. The disordered stretch occupies residues 174–193 (RKSAKYKDQQEAVASRISQD).

It belongs to the dCTP deaminase family. As to quaternary structure, homotrimer.

The enzyme catalyses dCTP + H2O + H(+) = dUTP + NH4(+). Its pathway is pyrimidine metabolism; dUMP biosynthesis; dUMP from dCTP (dUTP route): step 1/2. Its function is as follows. Catalyzes the deamination of dCTP to dUTP. This is dCTP deaminase from Shewanella baltica (strain OS223).